We begin with the raw amino-acid sequence, 1001 residues long: Copper-transporting ATPase RAN1 (1001 aa).

Residues 1-21 (MAPSRRDLQLTPVTGGSSSQI) are disordered. Over 1–298 (MAPSRRDLQL…TGEASNMFRR (298 aa)) the chain is Cytoplasmic. Residues 11–21 (TPVTGGSSSQI) are compositionally biased toward polar residues. HMA domains follow at residues 56 to 122 (RKIQ…FEAE) and 133 to 199 (LVGQ…FEGS). Cu(+) is bound by residues cysteine 67, cysteine 70, cysteine 144, and cysteine 147. The HMA 3; degenerate domain occupies 207 to 273 (DKLVLRVDGI…GIEEDGFGKF (67 aa)). A helical transmembrane segment spans residues 299-320 (FISSLVLSIPLFFIQVICPHIA). Over 321 to 338 (LFDALLVWRCGPFMMGDW) the chain is Extracellular. A helical transmembrane segment spans residues 339–358 (LKWALVSVIQFVIGKRFYVA). The Cytoplasmic segment spans residues 359 to 365 (AWRALRN). The helical transmembrane segment at 366 to 386 (GSTNMDVLVALGTSASYFYSV) threads the bilayer. The Extracellular segment spans residues 387–403 (GALLYGAVTGFWSPTYF). The helical transmembrane segment at 404–424 (DASAMLITFVLLGKYLESLAK) threads the bilayer. At 425–558 (GKTSDAMKKL…KAPIQKFADY (134 aa)) the chain is on the cytoplasmic side. A helical membrane pass occupies residues 559–581 (VASIFVPVVITLALFTLVGWSIG). Topologically, residues 582-602 (GAVGAYPDEWLPENGTHFVFS) are extracellular. A helical membrane pass occupies residues 603 to 620 (LMFSISVVVIACPCALGL). Topologically, residues 621–931 (ATPTAVMVAT…DLSRKTLTRI (311 aa)) are cytoplasmic. Aspartate 658 serves as the catalytic 4-aspartylphosphate intermediate. Mg(2+) is bound by residues aspartate 877 and aspartate 881. Residues 932–951 (RLNYVFAMAYNVVSIPIAAG) traverse the membrane as a helical segment. Topologically, residues 952–963 (VFFPVLRVQLPP) are extracellular. The helical transmembrane segment at 964-982 (WAAGACMALSSVSVVCSSL) threads the bilayer. At 983-1001 (LLRRYKKPRLTTVLKITTE) the chain is on the cytoplasmic side.

Belongs to the cation transport ATPase (P-type) (TC 3.A.3) family. Type IB subfamily.

Its subcellular location is the membrane. It catalyses the reaction Cu(+)(in) + ATP + H2O = Cu(+)(out) + ADP + phosphate + H(+). In terms of biological role, involved in copper import into the cell. Essential for ethylene signaling, which requires copper. Acts by delivering copper to create functional hormone receptors. The polypeptide is Copper-transporting ATPase RAN1 (RAN1) (Arabidopsis thaliana (Mouse-ear cress)).